We begin with the raw amino-acid sequence, 329 residues long: MSAAILLAPGDVIKRSSEELKQRQIQINLVDWMESEGGKEDKTEPKEESKAEGSKDGEGTQSESGQKEEGGKETKDADVDRRIHTAVGSGSGTKGSGERANENANRGDGKVGGGGGDADAGVGATGTNGGRWVVLTEEIARAIESKYGTKIDVYRDEVPAQIIEVERSLQKELGISREGVAEQTERLRDLRRKEKNGTHAKAVERGGRKQRKKAHGDAQREGVEEEKTSEEPARIGITIEGVMSQKKLLSMIGGVERKMAPIGARESAVMLVSNSIKDVVRATAYFTAPTGDPHWKEVAREASKKKNILAYTSTGGDVKTEFLHLIDHL.

Disordered regions lie at residues 28-130 and 189-232; these read NLVD…TNGG and DLRR…SEEP. Basic and acidic residues-rich tracts occupy residues 36–58, 65–83, and 96–109; these read EGGK…KDGE, GQKE…DRRI, and SGER…RGDG. An ATP-binding site is contributed by Lys110. A compositionally biased stretch (gly residues) spans 110 to 129; that stretch reads KVGGGGGDADAGVGATGTNG. Composition is skewed to basic and acidic residues over residues 189 to 207 and 215 to 232; these read DLRR…ERGG and HGDA…SEEP.

It belongs to the reoviruses VP6 family. Homohexamer.

It localises to the virion. The enzyme catalyses ATP + H2O = ADP + phosphate + H(+). Functionally, ATP dependent RNA helicase essential for RNA packaging and viral transcription. Possesses ss- and dsRNA-binding capacity. The sequence is that of Helicase VP6-A (Segment-9) from Bluetongue virus 10 (isolate USA) (BTV 10).